A 498-amino-acid chain; its full sequence is Angiopoietin-1 (498 aa).

The N-terminal stretch at Met-1–Cys-19 is a signal peptide. N-linked (GlcNAc...) asparagine glycans are attached at residues Asn-92, Asn-122, Asn-154, Asn-243, and Asn-295. Residues Arg-158–Leu-254 adopt a coiled-coil conformation. One can recognise a Fibrinogen C-terminal domain in the interval Lys-277–Asp-497. 2 disulfides stabilise this stretch: Cys-286–Cys-315 and Cys-439–Cys-452.

In terms of assembly, homooligomer. Interacts with TEK/TIE2. Interacts with SVEP1/polydom. Interacts with THBD; this interaction significantly inhibits the generation of activated PC and TAFIa/CPB2 by the thrombin/thrombomodulin complex.

Its subcellular location is the secreted. Functionally, binds and activates TIE2 receptor by inducing its tyrosine phosphorylation. Implicated in endothelial developmental processes later and distinct from that of VEGF. Appears to play a crucial role in mediating reciprocal interactions between the endothelium and surrounding matrix and mesenchyme. Mediates blood vessel maturation/stability. It may play an important role in the heart early development. The polypeptide is Angiopoietin-1 (ANGPT1) (Sus scrofa (Pig)).